The primary structure comprises 399 residues: Accessory Sec system protein translocase subunit SecY2 (399 aa).

The next 10 helical transmembrane spans lie at I14 to S34, L60 to I80, A102 to K122, S128 to A148, T152 to F172, A183 to I203, I237 to G257, F272 to L292, W335 to V355, and V362 to I382.

The protein belongs to the SecY/SEC61-alpha family. SecY2 subfamily. As to quaternary structure, component of the accessory SecA2/SecY2 protein translocase complex required to export cell wall proteins. May form heterotrimers with SecE and SecG subunits.

The protein localises to the cell membrane. Functionally, part of the accessory SecA2/SecY2 system specifically required for export of possible cell wall proteins. The central subunit of a protein translocation channel. This Staphylococcus epidermidis (strain ATCC 12228 / FDA PCI 1200) protein is Accessory Sec system protein translocase subunit SecY2.